The chain runs to 100 residues: Small ribosomal subunit protein uS14c (100 aa).

It belongs to the universal ribosomal protein uS14 family. As to quaternary structure, part of the 30S ribosomal subunit.

It is found in the plastid. Its function is as follows. Binds 16S rRNA, required for the assembly of 30S particles. This chain is Small ribosomal subunit protein uS14c, found in Aneura mirabilis (Parasitic liverwort).